The primary structure comprises 386 residues: Protein DOM34 (386 aa).

It belongs to the eukaryotic release factor 1 family. Pelota subfamily. As to quaternary structure, monomer. Component of the Dom34-Hbs1 complex, also named Pelota-HBS1L complex, composed of DOM34 and HBS1. A divalent metal cation is required as a cofactor.

The protein localises to the cytoplasm. Functionally, component of the Dom34-Hbs1 complex, a complex that recognizes stalled ribosomes and triggers the No-Go Decay (NGD) pathway. In the Dom34-Hbs1 complex, DOM34 recognizes ribosomes stalled at the 3' end of an mRNA and engages stalled ribosomes by destabilizing mRNA in the mRNA channel. Following ribosome-binding, the Dom34-Hbs1 complex promotes the disassembly of stalled ribosomes, followed by degradation of damaged mRNAs as part of the NGD pathway. The Dom34-Hbs1 complex is also involved in non-functional rRNA decay. This chain is Protein DOM34, found in Saccharomyces cerevisiae (strain ATCC 204508 / S288c) (Baker's yeast).